The primary structure comprises 475 residues: Protein ABCI7, chloroplastic (475 aa).

Residues methionine 1–arginine 36 constitute a chloroplast transit peptide.

Interacts with NAP7.

It localises to the plastid. It is found in the chloroplast. In Arabidopsis thaliana (Mouse-ear cress), this protein is Protein ABCI7, chloroplastic (ABCI7).